Reading from the N-terminus, the 510-residue chain is NEDD8-activating enzyme E1 regulatory subunit (510 aa).

Ala-2 is modified (N-acetylalanine). An N6-acetyllysine mark is found at Lys-6 and Lys-317. An interaction with UBA3 region spans residues 307 to 320; sequence DMIADSGKYIKLQN.

This sequence belongs to the ubiquitin-activating E1 family. ULA1 subfamily. Heterodimer of UBA3 and NAE1. The complex binds NEDD8 and UBE2M. Binds APP and TP53BP2. In terms of processing, ubiquitinated by TRIP12, leading to its degradation by the proteasome.

Its subcellular location is the cell membrane. Its pathway is protein modification; protein neddylation. Its activity is regulated as follows. Binding of TP53BP2 to the regulatory subunit NAE1 decreases neddylation activity. Functionally, regulatory subunit of the dimeric UBA3-NAE1 E1 enzyme. E1 activates NEDD8 by first adenylating its C-terminal glycine residue with ATP, thereafter linking this residue to the side chain of the catalytic cysteine, yielding a NEDD8-UBA3 thioester and free AMP. E1 finally transfers NEDD8 to the catalytic cysteine of UBE2M. Necessary for cell cycle progression through the S-M checkpoint. Overexpression of NAE1 causes apoptosis through deregulation of NEDD8 conjugation. The covalent attachment of NEDD8 to target proteins is known as 'neddylation' and the process is involved in the regulation of cell growth, viability and development. The chain is NEDD8-activating enzyme E1 regulatory subunit (NAE1) from Macaca fascicularis (Crab-eating macaque).